The primary structure comprises 2138 residues: MEGPSHVYLFGDQTADFDSGLRRLLHAKNDSLLAAFFQKSYYALRKEITSLPPSERQGFPRFTSIVDLLARFKESGPNPALESALTTIHQLGCFIHYYGDLGHAYPSADESCIIGLCTGQLASAAVSSSRTIGELISAGIETVVLALRLGMCVLKVQELIEPSKSATPSWSVLISGMHEPEAENLIQQYAKKNALPRVSQPYISAVSPNGLTISGPPTFLSRFIEDSVSKEHKPTRVPIHGPYHASHLYDDRDINRILESWPTEQFMTFVPQIPVISSETGKEFQAESLEQLLRLSLQEILQRQLCWDKVIESCQETLELATTCTLFPISSTATQSLFNSLKKAGVSNLEVDSTIGDVQKDSEGDNRTGRAEQSKIAIIGLSGRFPESPDTEAFWDLLKKGLDVHREVPPERWDVKAHVDKDGKIRNTSQVQYGCWYNDAGMFDPRFFNMSPREALQADPAQRLALLTAYEALEMAGFIPDSTPSTQKNRVGVFYGMTSDDYREVNSGQDIDTYFIPGGNRAFTPGRINYYFKFSGPSVSVDTACSSSLAAIHVACNSLWRNECDSAVAGGVNILTNPDNHAGLDRGHFLSRTGNCTTFDDGADGYCRADGIGSIVIKRLEDAQADNDPIYGIIGGAYTNHSAEAVSITRPHVGAQSFIFDKLLNESNSDPKEISYIEMHGTGTQAGDAVEMQSVLDVFAPDYRRGPAQSLHLGSAKSNVGHGESASGVTALIKVLMMMQKNMIPPHCGIKTKINHNFPTDFPQRNVHIASEPTPWNRPNGGKRKTFVNNFSAAGGNTALMVEDGPLDEENVEDPRSAHPVLVSARSQSALKNNISALVQYIDKNKNLFNSNEASLLANLSYTTTARRIHHPFRVAVTGSTLDEVRSGLAPIVNRDSISPAPANAPGIGFVFTGQGAQYTGMGRQLFESCSQFRAHIEHLNCIGQSQGFPSILSLVDGSVPIEEHSPVVTQLGTTCVQMALTKYWMSLGISPAFVIGHSLGEFAALNASGVLTTSDTIYLAGRRAQLLTEQIKVGTHAMLAVKSSVAQVKQFLDDATEVACINAPSETVISGAREKIDELAQTLTNEGFKATKLNVPFAFHSAQVEPILESLSEIGKGVNFNAPSIPFVSALLGDVINESNSELLGPNYLTRHCRETVNFLGALEATRHSNLMNDKTIWIEIGSHPVCSGMVKATFGPQATTVASLRRQEDTWKVLSASVSALYMAGIELRWKEYHQDFTAGHKVLPLPSYKWDLKNYWIPYTNNFCLLKGAPAVPVAEAAPVAVFLSSAAQRVLETSGDNSSASIVIENDIADPELNRVIAGHKVNGACLTPSSLYADIAQTLGEYLVQNYKPEWKDRGFDICNMMVPKPLIAKGGKQLFRVSATANWAEESAKVQVWSVTPEGKKILDHASCNIKFFDPSPYELEWKRSSYLIKRSIEHLQESTISGQAHRMKRGMVYKLFASLVDYDDNYKSMREVILDSEQHEATAVVKFEAPPGNFHRNPFWIDSIGHLSGFIMNASDNTDSKNQVFVNHGWDSMRCLKKFDPSVTYRTYVRMQPWKDSIWAGDVYMFDGDDVVAVYGGVKFQGLARKILDMALPPGGASAPKPAAKRVPAPINVQKAKPSVTKKASPSPKSGLPSMATRALAILAEEVGLAASEMTDDLNFADYGVDSLLSLTVTGRYREDMGLDLDSTVFVDSPTVKDFKHLLAQMGPGESSDGSSSEGDMSSAASSTDLSSPNTSGLPTPANEKSMTHGLQGQNDSMRQIASILAEEIGVDSEELLGDANLGEMGLDSLMSLTVLGKIREDLDLDLPGEFFIENQTLDDIETTLDLKPKLAPAEPIRLPEQIPVEAPVVAHSTATQHPPATSILLQGNPKTATQSLFLFPDGSGSATSYATIPGISPDVCVYGLNCPYMRTPENLKFSLDELTAPYVAEIRRRQPTGPYNFGGWSAGGICAYDAARKLIFEEGERVERLLLLDSPFPIGLEKLPPRLYSFFDTIGLFGEGKAPPPKWLLPHFLAFIDSLDAYKAVPFPYEDPKHADKLPKTFMVWAKDGVCSKPGDARPAPAADGSADPREMLWLLNNRTDLGPNGWDTLVGPKHVGGITVMEDANHFTMTRGQKAKELARFIANSMASA.

Residues 8 to 244 (YLFGDQTADF…TRVPIHGPYH (237 aa)) form an N-terminal acylcarrier protein transacylase domain (SAT) region. The region spanning 373-804 (QSKIAIIGLS…GGNTALMVED (432 aa)) is the Ketosynthase family 3 (KS3) domain. Residues Cys-545, His-680, and His-722 each act as for beta-ketoacyl synthase activity in the active site. The segment at 910-1229 (FVFTGQGAQY…VSALYMAGIE (320 aa)) is malonyl-CoA:ACP transacylase (MAT) domain. Ser-999 acts as the For acyl/malonyl transferase activity in catalysis. The tract at residues 1288-1601 (SSAAQRVLET…RKILDMALPP (314 aa)) is product template (PT) domain. Residues 1292–1423 (QRVLETSGDN…CNIKFFDPSP (132 aa)) form an N-terminal hotdog fold region. In terms of domain architecture, PKS/mFAS DH spans 1292-1596 (QRVLETSGDN…FQGLARKILD (305 aa)). His-1324 (proton acceptor; for dehydratase activity) is an active-site residue. Positions 1451 to 1596 (AHRMKRGMVY…FQGLARKILD (146 aa)) are C-terminal hotdog fold. The Proton donor; for dehydratase activity role is filled by Asp-1509. One can recognise a Carrier 1 domain in the interval 1640-1714 (PSMATRALAI…DFKHLLAQMG (75 aa)). At Ser-1674 the chain carries O-(pantetheine 4'-phosphoryl)serine. Residues 1712–1758 (QMGPGESSDGSSSEGDMSSAASSTDLSSPNTSGLPTPANEKSMTHGL) are disordered. Positions 1713 to 1739 (MGPGESSDGSSSEGDMSSAASSTDLSS) are enriched in low complexity. The span at 1740–1758 (PNTSGLPTPANEKSMTHGL) shows a compositional bias: polar residues. Positions 1759–1836 (QGQNDSMRQI…DIETTLDLKP (78 aa)) constitute a Carrier 2 domain. Ser-1796 carries the post-translational modification O-(pantetheine 4'-phosphoryl)serine. The tract at residues 1863–2135 (TQHPPATSIL…ELARFIANSM (273 aa)) is claisen cyclase domain. Residue Ser-1953 is the For Claisen cyclase activity of the active site.

It catalyses the reaction 6 malonyl-CoA + acetyl-CoA + 6 H(+) = naphtopyrone YWA1 + 6 CO2 + 7 CoA + H2O. The protein operates within pigment biosynthesis. Its pathway is polyketide biosynthesis; heptaketide naphthopyrone YWA1 biosynthesis. Its function is as follows. Non-reducing polyketide synthase involved in the biosynthesis of a yellow conidial pigment. Probably forms the heptaketide naphthopyrene YWA1 via condensation of acetate units. The sequence is that of Conidial yellow pigment biosynthesis polyketide synthase melA from Penicillium expansum (Blue mold rot fungus).